The sequence spans 560 residues: MRSDTIKKGFEKAPHRSLLKATGAISTRDDYSKPFIGICNSFNELIPGHAHLQELGRIAKEAVREAGGVPFEFNTIGVCDGIAMGHVGMRYSLASRELIADSVETVVEAHRLDGLVCIPNCDKITPGMMMGALRTNVPVIFVSGGPMSAGHTPSGKTVDLISVFEAVGQCSTGEITEDELQTIEECGCPGCGSCSGMFTANSMNCLCEALGFALPGNGTILAADPRRNELVKAAAGRIVDLVNKDVRPRSILSRQSMLNAFALDLAMGGSTNTILHTLAIASEAELEFDFSELNDLSAKTPYICKVSPATTEVHIEDVDRAGGISAILKELSKVEGLLDLSAPTVTGKTLGENIADAEVLDRSVIRSVEEPYSATGGLAVLYGNLAPNGSVVKTGAVSPSMMKHTGPAKVYDCQDDAIAGIMNGDVKSGDVVVIRYEGPRGGPGMPEMLSPTSAIMGRGLGDSVALITDGRFSGGSRGACVGHVSPEAADRGPIAAVQTGDMITIDIPGRTMSVALDDETIRQRIEALPEFEPKIKKGYLARYARMVTSANTGAVLTTNF.

Residue aspartate 80 participates in Mg(2+) binding. Cysteine 121 provides a ligand contact to [2Fe-2S] cluster. Mg(2+) is bound by residues aspartate 122 and lysine 123. N6-carboxylysine is present on lysine 123. Cysteine 194 is a binding site for [2Fe-2S] cluster. Mg(2+) is bound at residue glutamate 447. Serine 473 (proton acceptor) is an active-site residue.

Belongs to the IlvD/Edd family. In terms of assembly, homodimer. Requires [2Fe-2S] cluster as cofactor. The cofactor is Mg(2+).

The catalysed reaction is (2R)-2,3-dihydroxy-3-methylbutanoate = 3-methyl-2-oxobutanoate + H2O. The enzyme catalyses (2R,3R)-2,3-dihydroxy-3-methylpentanoate = (S)-3-methyl-2-oxopentanoate + H2O. The protein operates within amino-acid biosynthesis; L-isoleucine biosynthesis; L-isoleucine from 2-oxobutanoate: step 3/4. It functions in the pathway amino-acid biosynthesis; L-valine biosynthesis; L-valine from pyruvate: step 3/4. In terms of biological role, functions in the biosynthesis of branched-chain amino acids. Catalyzes the dehydration of (2R,3R)-2,3-dihydroxy-3-methylpentanoate (2,3-dihydroxy-3-methylvalerate) into 2-oxo-3-methylpentanoate (2-oxo-3-methylvalerate) and of (2R)-2,3-dihydroxy-3-methylbutanoate (2,3-dihydroxyisovalerate) into 2-oxo-3-methylbutanoate (2-oxoisovalerate), the penultimate precursor to L-isoleucine and L-valine, respectively. This chain is Dihydroxy-acid dehydratase, found in Chlorobaculum parvum (strain DSM 263 / NCIMB 8327) (Chlorobium vibrioforme subsp. thiosulfatophilum).